Consider the following 163-residue polypeptide: MLNHFNFKLKRDVTIIVPGEAFVSNKRVISTILGSCVAVVLCDESNNLIGMNHYVLVKSDLDISPDQRGRYGIYAIPMLINAMLENGASKSNLKAKLFGGTNFMAKGSVKVGLENSEFAVNTLNKYRIPILAKDFDQSKSRKIFAFPENFKVIVEYPDGTKVF.

The protein belongs to the CheD family.

It carries out the reaction L-glutaminyl-[protein] + H2O = L-glutamyl-[protein] + NH4(+). Probably deamidates glutamine residues to glutamate on methyl-accepting chemotaxis receptors (MCPs), playing an important role in chemotaxis. The protein is Probable chemoreceptor glutamine deamidase CheD of Borreliella burgdorferi (strain ATCC 35210 / DSM 4680 / CIP 102532 / B31) (Borrelia burgdorferi).